Here is a 456-residue protein sequence, read N- to C-terminus: Multidrug resistance protein NorM (456 aa).

Helical transmembrane passes span 11–31, 53–73, 92–112, 126–146, 159–179, 189–209, 242–262, 268–288, 314–334, 356–376, 385–405, and 417–437; these read LIKL…MGFV, IWLP…PVVA, VVLA…TQFI, TVGY…FQTL, AMVI…IFVY, GVGC…LLLA, FPVA…ALLV, IIVA…MLPM, SRVG…ITVL, LLLF…AAGA, AIFN…GYIL, and AQGF…MLGV.

The protein belongs to the multi antimicrobial extrusion (MATE) (TC 2.A.66.1) family.

The protein localises to the cell inner membrane. In terms of biological role, multidrug efflux pump that functions as a Na(+)/drug antiporter. Confers resistance to several drugs, such as norfloxacin, ciprofloxacin, ethidium, kanamycin and streptomycin. This Vibrio parahaemolyticus serotype O3:K6 (strain RIMD 2210633) protein is Multidrug resistance protein NorM (norM).